The sequence spans 135 residues: Galectin-1 (135 aa).

Residue Ala2 is modified to N-acetylalanine. The Galectin domain occupies Gly4–Asp135. Residues Lys13 and Lys29 each carry the N6-acetyllysine modification. At Ser30 the chain carries Phosphoserine; by FAM20C. A beta-D-galactoside is bound by residues His45–Arg49, His53, Asn62, and Trp69–Glu72. An N6-acetyllysine; alternate modification is found at Lys108. Lys108 is modified (N6-succinyllysine; alternate). Lys128 is modified (N6-acetyllysine).

Homodimer. Binds LGALS3BP. Interacts with CD2, CD3, CD4, CD6, CD7, CD43, ALCAM and CD45. Interacts with laminin (via poly-N-acetyllactosamine). Interacts with SUSD2. Interacts with cargo receptor TMED10; the interaction mediates the translocation from the cytoplasm into the ERGIC (endoplasmic reticulum-Golgi intermediate compartment) and thereby secretion. Interacts with CD69. As to expression, expressed in placenta, maternal decidua and fetal membranes. Within placenta, expressed in trophoblasts, stromal cells, villous endothelium, syncytiotrophoblast apical membrane and villous stroma. Within fetal membranes, expressed in amnion, chorioamniotic mesenchyma and chorion (at protein level). Expressed in cardiac, smooth, and skeletal muscle, neurons, thymus, kidney and hematopoietic cells.

The protein resides in the secreted. The protein localises to the extracellular space. It localises to the extracellular matrix. It is found in the cytoplasm. Functionally, lectin that binds beta-galactoside and a wide array of complex carbohydrates. Plays a role in regulating apoptosis, cell proliferation and cell differentiation. Inhibits CD45 protein phosphatase activity and therefore the dephosphorylation of Lyn kinase. Strong inducer of T-cell apoptosis. Plays a negative role in Th17 cell differentiation via activation of the receptor CD69. The chain is Galectin-1 from Homo sapiens (Human).